Here is a 335-residue protein sequence, read N- to C-terminus: 3-ketodihydrosphingosine reductase TSC10 (335 aa).

G42, S44, S45, G46, R67, D68, K71, D95, and L96 together coordinate NADPH. The GXSXG signature appears at 42-46 (GGSSG). Residues 141-207 (LKDGLDGVYW…RGLSDALRSE (67 aa)) are involved in homodimer formation. The active-site Proton acceptor is Y190. Residues Y190, K194, and I223 each coordinate NADP(+). The Lowers pKa of active site Tyr role is filled by K194. The chain crosses the membrane as a helical span at residues 288 to 308 (TNNFLLDTLWLIVSSVGVPIW).

It belongs to the short-chain dehydrogenases/reductases (SDR) family. Homodimer; a minor portion forms homotetramers.

It localises to the endoplasmic reticulum membrane. The enzyme catalyses sphinganine + NADP(+) = 3-oxosphinganine + NADPH + H(+). It participates in lipid metabolism; sphingolipid metabolism. In terms of biological role, catalyzes the reduction of 3'-oxosphinganine (3-ketodihydrosphingosine/KDS) to sphinganine (dihydrosphingosine/DHS), the second step of de novo sphingolipid biosynthesis. This is 3-ketodihydrosphingosine reductase TSC10 (TSC10) from Cryptococcus neoformans var. neoformans serotype D (strain JEC21 / ATCC MYA-565) (Filobasidiella neoformans).